The sequence spans 156 residues: Small ribosomal subunit protein uS7 (156 aa).

Belongs to the universal ribosomal protein uS7 family. Part of the 30S ribosomal subunit. Contacts proteins S9 and S11.

Functionally, one of the primary rRNA binding proteins, it binds directly to 16S rRNA where it nucleates assembly of the head domain of the 30S subunit. Is located at the subunit interface close to the decoding center, probably blocks exit of the E-site tRNA. This Azoarcus sp. (strain BH72) protein is Small ribosomal subunit protein uS7.